Reading from the N-terminus, the 502-residue chain is Glycerol kinase (502 aa).

Thr-14 is a binding site for ADP. Residues Thr-14, Thr-15, and Ser-16 each coordinate ATP. Thr-14 contributes to the sn-glycerol 3-phosphate binding site. Arg-18 serves as a coordination point for ADP. Sn-glycerol 3-phosphate contacts are provided by Arg-84, Glu-85, Tyr-137, and Asp-247. Glycerol is bound by residues Arg-84, Glu-85, Tyr-137, Asp-247, and Gln-248. ADP-binding residues include Thr-269 and Gly-312. ATP-binding residues include Thr-269, Gly-312, Gln-316, and Gly-413. Positions 413 and 417 each coordinate ADP.

Belongs to the FGGY kinase family. As to quaternary structure, homotetramer and homodimer (in equilibrium). Heterodimer with EIIA-Glc. Binds 1 zinc ion per glycerol kinase EIIA-Glc dimer. The zinc ion is important for dimerization.

It catalyses the reaction glycerol + ATP = sn-glycerol 3-phosphate + ADP + H(+). It functions in the pathway polyol metabolism; glycerol degradation via glycerol kinase pathway; sn-glycerol 3-phosphate from glycerol: step 1/1. With respect to regulation, activity of this regulatory enzyme is affected by several metabolites. Allosterically and non-competitively inhibited by fructose 1,6-bisphosphate (FBP) and unphosphorylated phosphocarrier protein EIIA-Glc (III-Glc), an integral component of the bacterial phosphotransferase (PTS) system. Its function is as follows. Key enzyme in the regulation of glycerol uptake and metabolism. Catalyzes the phosphorylation of glycerol to yield sn-glycerol 3-phosphate. In Photorhabdus laumondii subsp. laumondii (strain DSM 15139 / CIP 105565 / TT01) (Photorhabdus luminescens subsp. laumondii), this protein is Glycerol kinase.